Reading from the N-terminus, the 163-residue chain is Large ribosomal subunit protein uL22c (163 aa).

The protein belongs to the universal ribosomal protein uL22 family. As to quaternary structure, part of the 50S ribosomal subunit.

It is found in the plastid. The protein localises to the chloroplast. This protein binds specifically to 23S rRNA. Functionally, the globular domain of the protein is located near the polypeptide exit tunnel on the outside of the subunit, while an extended beta-hairpin is found that lines the wall of the exit tunnel in the center of the 70S ribosome. This is Large ribosomal subunit protein uL22c (rpl22) from Lobularia maritima (Sweet alyssum).